The chain runs to 158 residues: Fluoride-specific ion channel FluC 2 (158 aa).

A run of 4 helical transmembrane segments spans residues 25 to 45, 63 to 83, 95 to 115, and 126 to 146; these read AWHG…IGGT, WTTF…MVVI, PFFG…AVDI, and TALA…RLAA. The Na(+) site is built by Gly103 and Thr106.

Belongs to the fluoride channel Fluc/FEX (TC 1.A.43) family.

It is found in the cell membrane. It carries out the reaction fluoride(in) = fluoride(out). Its activity is regulated as follows. Na(+) is not transported, but it plays an essential structural role and its presence is essential for fluoride channel function. In terms of biological role, fluoride-specific ion channel. Important for reducing fluoride concentration in the cell, thus reducing its toxicity. This Streptomyces avermitilis (strain ATCC 31267 / DSM 46492 / JCM 5070 / NBRC 14893 / NCIMB 12804 / NRRL 8165 / MA-4680) protein is Fluoride-specific ion channel FluC 2.